The chain runs to 358 residues: tRNA N6-adenosine threonylcarbamoyltransferase (358 aa).

Fe cation contacts are provided by H118 and H122. Residues 143–147 (IVSGG), D176, G189, and N298 contribute to the substrate site. A Fe cation-binding site is contributed by D326.

Belongs to the KAE1 / TsaD family. The cofactor is Fe(2+).

Its subcellular location is the cytoplasm. It carries out the reaction L-threonylcarbamoyladenylate + adenosine(37) in tRNA = N(6)-L-threonylcarbamoyladenosine(37) in tRNA + AMP + H(+). Its function is as follows. Required for the formation of a threonylcarbamoyl group on adenosine at position 37 (t(6)A37) in tRNAs that read codons beginning with adenine. Is involved in the transfer of the threonylcarbamoyl moiety of threonylcarbamoyl-AMP (TC-AMP) to the N6 group of A37, together with TsaE and TsaB. TsaD likely plays a direct catalytic role in this reaction. This chain is tRNA N6-adenosine threonylcarbamoyltransferase, found in Rhodopirellula baltica (strain DSM 10527 / NCIMB 13988 / SH1).